The primary structure comprises 766 residues: Slit homolog 2 protein (766 aa).

Positions Met-1 to Ala-30 are cleaved as a signal peptide. Residues Gln-31–Arg-55 enclose the LRRNT domain. LRR repeat units lie at residues Asn-56–Gly-77, His-80–Asp-101, Glu-104–Gly-125, Lys-128–Gly-149, Asp-152–Ala-173, and Asp-176–His-197. Asn-66 is a glycosylation site (N-linked (GlcNAc...) asparagine). Residue Asn-186 is glycosylated (N-linked (GlcNAc...) asparagine). The LRRCT 1 domain occupies Asn-209–Asp-259. An LRRNT 2 domain is found at Met-268–Glu-304. A disulfide bond links Cys-281 and Cys-290. LRR repeat units follow at residues Thr-305–Pro-326, Lys-329–Gly-350, Ser-353–Gly-374, Ser-377–Asp-398, and Asn-401–Ala-422. Positions Asn-434 to Gly-484 constitute an LRRCT 2 domain. Intrachain disulfides connect Cys-438-Cys-461, Cys-440-Cys-482, Cys-502-Cys-508, and Cys-506-Cys-515. The 37-residue stretch at Ser-493 to Gln-529 folds into the LRRNT 3 domain. 5 LRR repeats span residues Tyr-530–Lys-551, Gln-555–Gly-576, Gly-579–Gly-600, Ser-603–Gly-624, and Ser-627–Thr-648. N-linked (GlcNAc...) asparagine glycosylation is present at Asn-560. Asn-619 carries N-linked (GlcNAc...) asparagine glycosylation. An LRRCT 3 domain is found at Asn-660–Asp-710. Cystine bridges form between Cys-664/Cys-687, Cys-666/Cys-708, Cys-723/Cys-729, and Cys-727/Cys-736. Residues Asp-714–Arg-750 form the LRRNT 4 domain.

Homodimer. Binds ROBO1 and ROBO2 with high affinity. Interacts with GREM1.

Its subcellular location is the secreted. In terms of biological role, thought to act as molecular guidance cue in cellular migration, and function appears to be mediated by interaction with roundabout homolog receptors. During neural development involved in axonal navigation at the ventral midline of the neural tube and projection of axons to different regions. SLIT1 and SLIT2 seem to be essential for midline guidance in the forebrain by acting as repulsive signal preventing inappropriate midline crossing by axons projecting from the olfactory bulb. In spinal cord development may play a role in guiding commissural axons once they reached the floor plate by modulating the response to netrin. In vitro, silences the attractive effect of NTN1 but not its growth-stimulatory effect and silencing requires the formation of a ROBO1-DCC complex. May be implicated in spinal cord midline post-crossing axon repulsion. In vitro, only commissural axons that crossed the midline responded to SLIT2. In the developing visual system appears to function as repellent for retinal ganglion axons by providing a repulsion that directs these axons along their appropriate paths prior to, and after passage through, the optic chiasm. In vitro, collapses and repels retinal ganglion cell growth cones. Seems to play a role in branching and arborization of CNS sensory axons, and in neuronal cell migration. Seems to be involved in regulating leukocyte migration. The protein is Slit homolog 2 protein (Slit2) of Rattus norvegicus (Rat).